We begin with the raw amino-acid sequence, 198 residues long: Imidazoleglycerol-phosphate dehydratase (198 aa).

The protein belongs to the imidazoleglycerol-phosphate dehydratase family.

The protein localises to the cytoplasm. The enzyme catalyses D-erythro-1-(imidazol-4-yl)glycerol 3-phosphate = 3-(imidazol-4-yl)-2-oxopropyl phosphate + H2O. It participates in amino-acid biosynthesis; L-histidine biosynthesis; L-histidine from 5-phospho-alpha-D-ribose 1-diphosphate: step 6/9. The polypeptide is Imidazoleglycerol-phosphate dehydratase (Gluconobacter oxydans (strain 621H) (Gluconobacter suboxydans)).